We begin with the raw amino-acid sequence, 640 residues long: Sodium-dependent nutrient amino acid transporter 1 (640 aa).

Low complexity predominate over residues 1–13 (MELKPNGNHNNNN). The tract at residues 1–25 (MELKPNGNHNNNNAAEKSEDTEKAK) is disordered. The Cytoplasmic segment spans residues 1–30 (MELKPNGNHNNNNAAEKSEDTEKAKAERTN). Over residues 16-25 (EKSEDTEKAK) the composition is skewed to basic and acidic residues. Helical transmembrane passes span 31–51 (WGNG…LGNV), 64–84 (GAFL…MYYL), and 117–137 (TICI…YLFV). Asn174, Asn181, and Asn197 each carry an N-linked (GlcNAc...) asparagine glycan. Transmembrane regions (helical) follow at residues 228-248 (PDWK…LVIM), 257-277 (AAYF…IRAV), 306-326 (AVVQ…MFAS), 340-360 (IVTT…FAIL), 400-420 (LFSV…IVAL), 447-467 (CGFL…LTLV), 473-493 (TYVV…IYGL), 515-535 (CWSF…MVTI), and 551-571 (VAGW…GLWY).

The protein belongs to the sodium:neurotransmitter symporter (SNF) (TC 2.A.22) family.

The protein resides in the membrane. Its function is as follows. Unusual broad substrate spectrum amino acid:sodium cotransporter that promotes absorption of the D isomers of essential amino acids. Neutral amino acids are the preferred substrates, especially methionine and phenylalanine. The polypeptide is Sodium-dependent nutrient amino acid transporter 1 (Drosophila ananassae (Fruit fly)).